The chain runs to 763 residues: MDHLNEATQGKEHSEMSNNVSDPKGPPAKIARLEQNGSPLGRGRLGSTGAKMQGVPLKHSGHLMKTNLRKGTMLPVFCVVEHYENAIEYDCKEEHAEFVLVRKDMLFNQLIEMALLSLGYSHSSAAQAKGLIQVGKWNPVPLSYVTDAPDATVADMLQDVYHVVTLKIQLHSCPKLEDLPPEQWSHTTVRNALKDLLKDMNQSSLAKECPLSQSMISSIVNSTYYANVSAAKCQEFGRWYKHFKKTKDMMVEMDSLSELSQQGANHVNFGQQPVPGNTAEQPPSPAQLSHGSQPSVRTPLPNLHPGLVSTPISPQLVNQQLVMAQLLNQQYAVNRLLAQQSLNQQYLNHPPPVSRSMNKPLEQQVSTNTEVSSEIYQWVRDELKRAGISQAVFARVAFNRTQGLLSEILRKEEDPKTASQSLLVNLRAMQNFLQLPEAERDRIYQDERERSLNAASAMGPAPLISTPPSRPPQVKTATIATERNGKPENNTMNINASIYDEIQQEMKRAKVSQALFAKVAATKSQGWLCELLRWKEDPSPENRTLWENLSMIRRFLSLPQPERDAIYEQESNAVHHHGDRPPHIIHVPAEQIQQQQQQQQQQQQQQQAPPPPQPQQQPQTGPRLPPRQPTVASPAESDEENRQKTRPRTKISVEALGILQSFIQDVGLYPDEEAIQTLSAQLDLPKYTIIKFFQNQRYYLKHHGKLKDNSGLEVDVAEYKEEELLKDLEESVQDKNTNTLFSVKLEEELSVEGNTDINTDLKD.

Residues 1-15 (MDHLNEATQGKEHSE) show a composition bias toward basic and acidic residues. The segment at 1–54 (MDHLNEATQGKEHSEMSNNVSDPKGPPAKIARLEQNGSPLGRGRLGSTGAKMQG) is disordered. A Nuclear localization signal motif is present at residues 20-40 (VSDPKGPPAKIARLEQNGSPL). Residue lysine 51 forms a Glycyl lysine isopeptide (Lys-Gly) (interchain with G-Cter in SUMO2) linkage. The CMP domain occupies 71 to 172 (GTMLPVFCVV…VVTLKIQLHS (102 aa)). Lysine 136 carries the post-translational modification N6-acetyllysine. The Protein interaction signature appears at 139 to 143 (PVPLS). A CUTL domain is found at 175-248 (KLEDLPPEQW…WYKHFKKTKD (74 aa)). Position 185 is a phosphoserine (serine 185). The tract at residues 224 to 278 (YYANVSAAKCQEFGRWYKHFKKTKDMMVEMDSLSELSQQGANHVNFGQQPVPGNT) is nuclear matrix targeting sequence (NMTS). The span at 266-296 (HVNFGQQPVPGNTAEQPPSPAQLSHGSQPSV) shows a compositional bias: polar residues. Residues 266–307 (HVNFGQQPVPGNTAEQPPSPAQLSHGSQPSVRTPLPNLHPGL) are disordered. DNA-binding regions (CUT) lie at residues 361–448 (LEQQ…QDER) and 484–571 (NGKP…EQES). Residues glutamine 390, 400–410 (RTQGLLSEILR), and asparagine 425 contribute to the DNA site. Low complexity predominate over residues 591-607 (QIQQQQQQQQQQQQQQQ). The segment at 591-649 (QIQQQQQQQQQQQQQQQAPPPPQPQQQPQTGPRLPPRQPTVASPAESDEENRQKTRPRT) is disordered. A Phosphoserine modification is found at serine 637. The homeobox DNA-binding region spans 645–704 (TRPRTKISVEALGILQSFIQDVGLYPDEEAIQTLSAQLDLPKYTIIKFFQNQRYYLKHHG). A Glycyl lysine isopeptide (Lys-Gly) (interchain with G-Cter in SUMO) cross-link involves residue lysine 744.

Belongs to the CUT homeobox family. In terms of assembly, interacts with CUX1 (via DNA-binding domains); the interaction inhibits the attachment of both proteins to DNA. Homodimer. Part of the nuclear protein complex gamma-globin promoter and enhancer binding factor (gamma-PE) composed at least of SATB1 and HOXB2. Interaction with CtBP1 when not acetylated stabilizes attachment to DNA and promotes transcription repression. Interacts with PCAF. Interacts with sumoylated PML and HDAC1 via the CMP domain. Interacts also with DYNLT3 and POLR2J2. Binds to EP300. (Microbial infection) Interacts (via the CMP domain) with HIV-1 Tat. In terms of processing, sumoylated. Sumoylation promotes cleavage by caspases. Phosphorylated by PKC. Acetylated by PCAF. Phosphorylated form interacts with HDAC1, but unphosphorylated form interacts with PCAF. DNA binding properties are activated by phosphorylation and inactivated by acetylation. In opposition, gene expression is down-regulated by phosphorylation but up-regulated by acetylation. Post-translationally, cleaved at Asp-254 by caspase-3 and caspase-6 during T-cell apoptosis in thymus and during B-cell stimulation. The cleaved forms cannot dimerize and lose transcription regulation function because of impaired DNA and chromatin association. As to expression, expressed predominantly in thymus.

It localises to the nucleus matrix. The protein localises to the nucleus. The protein resides in the PML body. In terms of biological role, crucial silencing factor contributing to the initiation of X inactivation mediated by Xist RNA that occurs during embryogenesis and in lymphoma. Binds to DNA at special AT-rich sequences, the consensus SATB1-binding sequence (CSBS), at nuclear matrix- or scaffold-associated regions. Thought to recognize the sugar-phosphate structure of double-stranded DNA. Transcriptional repressor controlling nuclear and viral gene expression in a phosphorylated and acetylated status-dependent manner, by binding to matrix attachment regions (MARs) of DNA and inducing a local chromatin-loop remodeling. Acts as a docking site for several chromatin remodeling enzymes (e.g. PML at the MHC-I locus) and also by recruiting corepressors (HDACs) or coactivators (HATs) directly to promoters and enhancers. Modulates genes that are essential in the maturation of the immune T-cell CD8SP from thymocytes. Required for the switching of fetal globin species, and beta- and gamma-globin genes regulation during erythroid differentiation. Plays a role in chromatin organization and nuclear architecture during apoptosis. Interacts with the unique region (UR) of cytomegalovirus (CMV). Alu-like motifs and SATB1-binding sites provide a unique chromatin context which seems preferentially targeted by the HIV-1 integration machinery. Moreover, HIV-1 Tat may overcome SATB1-mediated repression of IL2 and IL2RA (interleukin) in T-cells by binding to the same domain than HDAC1. Delineates specific epigenetic modifications at target gene loci, directly up-regulating metastasis-associated genes while down-regulating tumor-suppressor genes. Reprograms chromatin organization and the transcription profiles of breast tumors to promote growth and metastasis. Promotes neuronal differentiation of neural stem/progenitor cells in the adult subventricular zone, possibly by positively regulating the expression of NEUROD1. This is DNA-binding protein SATB1 from Homo sapiens (Human).